The sequence spans 247 residues: Uridylate kinase (247 aa).

18-21 lines the ATP pocket; sequence KLSG. Glycine 60 provides a ligand contact to UMP. Residues glycine 61 and arginine 65 each contribute to the ATP site. Residues aspartate 80 and 141 to 148 contribute to the UMP site; that span reads TGNPFFTT. Positions 168, 174, and 177 each coordinate ATP.

Belongs to the UMP kinase family. Homohexamer.

It is found in the cytoplasm. It carries out the reaction UMP + ATP = UDP + ADP. It participates in pyrimidine metabolism; CTP biosynthesis via de novo pathway; UDP from UMP (UMPK route): step 1/1. Inhibited by UTP. Catalyzes the reversible phosphorylation of UMP to UDP. This is Uridylate kinase from Stutzerimonas stutzeri (strain A1501) (Pseudomonas stutzeri).